The chain runs to 453 residues: Carbamoyl phosphate synthase arginine-specific small chain (453 aa).

The N-terminal 33 residues, 1 to 33 (MFSRLAARLPKASALNGVAARQVRNLSQPAITG), are a transit peptide targeting the mitochondrion. The disordered stretch occupies residues 26–50 (LSQPAITGSKGRNMPAREPRTTAAA). Residues Ser97, Gly280, and Gly282 each coordinate L-glutamine. The Glutamine amidotransferase type-1 domain occupies 233–420 (HVALIDCGVK…MENVELFKSN (188 aa)). Residue Cys309 is the Nucleophile of the active site. L-glutamine contacts are provided by Leu310, Gln313, Asn351, Gly353, and Tyr354. Active-site residues include His393 and Glu395.

It belongs to the CarA family. In terms of assembly, heterodimer composed of 2 chains; the small (or glutamine) chain promotes the hydrolysis of glutamine to ammonia, which is used by the large (or ammonia) chain to synthesize carbamoyl phosphate.

It localises to the mitochondrion matrix. The catalysed reaction is hydrogencarbonate + L-glutamine + 2 ATP + H2O = carbamoyl phosphate + L-glutamate + 2 ADP + phosphate + 2 H(+). It carries out the reaction L-glutamine + H2O = L-glutamate + NH4(+). Its pathway is amino-acid biosynthesis; L-arginine biosynthesis; carbamoyl phosphate from bicarbonate: step 1/1. Functionally, small subunit of the arginine-specific carbamoyl phosphate synthase (CPSase). CPSase catalyzes the formation of carbamoyl phosphate from the ammonia moiety of glutamine, carbonate, and phosphate donated by ATP, the first step of the arginine biosynthetic pathway. The small subunit (glutamine amidotransferase) binds and cleaves glutamine to supply the large subunit with the substrate ammonia. This is Carbamoyl phosphate synthase arginine-specific small chain (arg-2) from Neurospora crassa (strain ATCC 24698 / 74-OR23-1A / CBS 708.71 / DSM 1257 / FGSC 987).